We begin with the raw amino-acid sequence, 279 residues long: Large ribosomal subunit protein uL3 (279 aa).

Residue Gln-151 is modified to N5-methylglutamine.

This sequence belongs to the universal ribosomal protein uL3 family. Part of the 50S ribosomal subunit. Forms a cluster with proteins L14 and L19. Methylated by PrmB.

In terms of biological role, one of the primary rRNA binding proteins, it binds directly near the 3'-end of the 23S rRNA, where it nucleates assembly of the 50S subunit. This Dinoroseobacter shibae (strain DSM 16493 / NCIMB 14021 / DFL 12) protein is Large ribosomal subunit protein uL3.